The primary structure comprises 150 residues: UPF0735 ACT domain-containing protein Csac_0995 (150 aa).

An ACT domain is found at 72 to 147; it reads TLALVLQDVP…GVKKIEILGR (76 aa).

Belongs to the UPF0735 family.

This chain is UPF0735 ACT domain-containing protein Csac_0995, found in Caldicellulosiruptor saccharolyticus (strain ATCC 43494 / DSM 8903 / Tp8T 6331).